The following is an 855-amino-acid chain: MVVMARLSRPERPDLVFEEEDLPYEEEIMRNQFSVKCWLRYIEFKQGAPKPRLNQLYERALKLLPCSYKLWYRYLKARRAQVKHRCVTDPAYEDVNNCHERAFVFMHKMPRLWLDYCQFLMDQGRVTHTRRTFDRALRALPITQHSRIWPLYLRFLRSHPLPETAVRGYRRFLKLSPESAEEYIEYLKSSDRLDEAAQRLATVVNDERFVSKAGKSNYQLWHELCDLISQNPDKVQSLNVDAIIRGGLTRFTDQLGKLWCSLADYYIRSGHFEKARDVYEEAIRTVMTVRDFTQVFDSYAQFEESMIAAKMETASELGREEEDDVDLELRLARFEQLISRRPLLLNSVLLRQNPHHVHEWHKRVALHQGRPREIINTYTEAVQTVDPFKATGKPHTLWVAFAKFYEDNGQLDDARVILEKATKVNFKQVDDLASVWCQCGELELRHENYDEALRLLRKATALPARRAEYFDGSEPVQNRVYKSLKVWSMLADLEESLGTFQSTKAVYDRILDLRIATPQIVINYAMFLEEHKYFEESFKAYERGISLFKWPNVSDIWSTYLTKFIARYGGRKLERARDLFEQALDGCPPKYAKTLYLLYAQLEEEWGLARHAMAVYERATRAVEPAQQYDMFNIYIKRAAEIYGVTHTRGIYQKAIEVLSDEHAREMCLRFADMECKLGEIDRARAIYSFCSQICDPRTTGAFWQTWKDFEVRHGNEDTIKEMLRIRRSVQATYNTQVNFMASQMLKVSGSATGTVSDLAPGQSGMDDMKLLEQRAEQLAAEAERDQPLRAQSKILFVRSDASREELAELAQQVNPEEIQLGEDEDEDEMDLEPNEVRLEQQSVPAAVFGSLKED.

HAT repeat units lie at residues 15–47, 48–80, 90–122, 124–158, 160–192, 198–230, 235–268, 270–305, and 369–407; these read LVFE…FKQG, APKP…ARRA, PAYE…FLMD, GRVT…FLRS, PLPE…SSDR, QRLA…LISQ, VQSL…YYIR, GHFE…FEES, and GRPR…FYED. Residue Lys420 is modified to N6-acetyllysine. HAT repeat units follow at residues 498–530, 532–566, 571–605, 643–677, and 679–713; these read GTFQ…FLEE, KYFE…KFIA, RKLE…LEEE, YGVT…MECK, and GEID…FEVR. Residues 810-855 form a disordered region; it reads LAQQVNPEEIQLGEDEDEDEMDLEPNEVRLEQQSVPAAVFGSLKED. Residues 820–834 are compositionally biased toward acidic residues; the sequence is QLGEDEDEDEMDLEP. Ser851 carries the post-translational modification Phosphoserine.

It belongs to the crooked-neck family. As to quaternary structure, associates with RNA polymerase II, the TCR-specific proteins CKN1/CSA and ERCC6/CSB, and XPA. Identified in the spliceosome C complex. Component of the XAB2 complex, a multimeric protein complex composed of XAB2, PRPF19, AQR, ZNF830, ISY1, and PPIE. Identified in a pentameric intron-binding (IB) complex composed of AQR, XAB2, ISY1, ZNF830 and PPIE that is incorporated into the spliceosome as a preassembled complex. The IB complex does not contain PRPF19.

Its subcellular location is the nucleus. In terms of biological role, involved in pre-mRNA splicing as component of the spliceosome. Involved in transcription-coupled repair (TCR), transcription and pre-mRNA splicing. This chain is Pre-mRNA-splicing factor SYF1 (XAB2), found in Homo sapiens (Human).